Here is a 981-residue protein sequence, read N- to C-terminus: NAD(+) hydrolase tir-1 (981 aa).

Disordered stretches follow at residues 1–31, 74–128, and 173–225; these read MLPNRKPPRPSPSFQSLNNNNQRFPLRRSLK, QNEQ…PTQP, and LSTP…PVDQ. Polar residues-rich tracts occupy residues 12 to 23 and 74 to 85; these read PSFQSLNNNNQR and QNEQDGETTSTD. The span at 87 to 97 shows a compositional bias: acidic residues; sequence AFFELDDDDDL. A compositionally biased stretch (low complexity) spans 98-114; it reads SSPSVPGSPVDPPSISV. Over residues 115–128 the composition is skewed to pro residues; it reads PLPPKSAPPCPTQP. Positions 182-200 are enriched in basic and acidic residues; the sequence is EEMHNGQVRKESEYRRFKS. SAM domains lie at 614–678 and 684–750; these read WTCA…LKVA and VDES…AKHP. A TIR domain is found at 760–857; it reads KQIDVFISYR…EHQKNIIPIF (98 aa). NAD(+) is bound at residue 769–770; it reads RR. Residue glutamate 842 is part of the active site. Polar residues-rich tracts occupy residues 908 to 939, 954 to 963, and 972 to 981; these read TTPTTKEMPSISRKTTQQRWQTTNTVSRTGPS, FTPTGSQERA, and PSASTTSDRN. Residues 908–981 form a disordered region; that stretch reads TTPTTKEMPS…PSASTTSDRN (74 aa).

It belongs to the SARM1 family. In terms of assembly, homodimer. Interacts with rab-1, pal-1 and unc-43. As to expression, highly expressed in hypodermis. Localizes to postsynaptic regions of axons.

It localises to the cytoplasm. The enzyme catalyses NAD(+) + H2O = ADP-D-ribose + nicotinamide + H(+). NAD(+) hydrolase, which plays a key role in non-apoptotic cell death by regulating NAD(+) metabolism. In response to stress, homooligomerizes and catalyzes cleavage of NAD(+) into ADP-D-ribose (ADPR) and nicotinamide; NAD(+) cleavage promoting non-apoptotic neuronal cell death. In males, involved in non-apoptotic death of the linker cell which guides gonad elongation during larval development. Required for both innate immune response and specification of AWC(OFF) neuron. During late embryogenesis, it acts downstream of CAMKII (unc-43) to regulate specification of asymmetric odorant receptors in AWC(OFF) neuron via the nsy-1/ASK1 pmk-1/p38 MAP kinase signaling cascade. Required to localize nsy-1 to postsynaptic regions of AWC neuron, suggesting that it may act by assembling a signaling complex that regulate odorant receptor expression. Also plays a central role in resistance to infection to a broad range of bacterial and fungi pathogens, possibly by activating pmk-1, independently of the NF-kappa-B pathway. Required for expression of antimicrobial peptides nlp-29 and nlp-31. Its role in immune response and neuron specification may be mediated by the same nsy-1/ASK1 pmk-1/p38 MAP kinase cascade signaling pathway. Involved in the response to anoxic conditions probably by activating the p38 pathway composed of nsy-1/sek-1/pmk-1. Involved in regulation of the serotonergic response of ADF neurons to pathogenic food. In addition, plays a role in the up-regulation of gcs-1 upon arsenite treatment, most likely through activation of pmk-1, to confer protection against toxicity induced by heavy metals. In terms of biological role, regulates expression of antimicrobial peptide nlp-29 in response to fungal infection or physical injury. This is NAD(+) hydrolase tir-1 from Caenorhabditis elegans.